Reading from the N-terminus, the 242-residue chain is Potassium/proton antiporter CemA (242 aa).

The next 2 helical transmembrane spans lie at 116 to 136 (IIFC…YSIL) and 200 to 220 (ISGF…YLIF).

It belongs to the CemA family.

Its subcellular location is the plastid. It is found in the chloroplast inner membrane. It carries out the reaction K(+)(in) + H(+)(out) = K(+)(out) + H(+)(in). Its function is as follows. Contributes to K(+)/H(+) antiport activity by supporting proton efflux to control proton extrusion and homeostasis in chloroplasts in a light-dependent manner to modulate photosynthesis. Prevents excessive induction of non-photochemical quenching (NPQ) under continuous-light conditions. Indirectly promotes efficient inorganic carbon uptake into chloroplasts. The polypeptide is Potassium/proton antiporter CemA (Chloranthus spicatus (Chulantree)).